Here is a 616-residue protein sequence, read N- to C-terminus: Protein decapentaplegic (616 aa).

A signal peptide spans 1-23 (MRAWILLLAVLATSQPIVQVAST). Residues 24–474 (EDTSISQRFI…DGRHKARSIR (451 aa)) constitute a propeptide that is removed on maturation. A disordered region spans residues 80 to 188 (SDSDSDNNNN…TSTESHQSPI (109 aa)). The segment covering 86–105 (NNNNNYKNRNNNNNNLNKGP) has biased composition (low complexity). Residues 106–115 (RNNKNKGNKH) show a composition bias toward basic residues. Basic and acidic residues predominate over residues 116 to 139 (SKSDANRQFNEVHKPRTDQLENSK). An N-linked (GlcNAc...) asparagine glycan is attached at N147. The span at 173 to 188 (ATTTALTSTESHQSPI) shows a compositional bias: polar residues. N360 and N395 each carry an N-linked (GlcNAc...) asparagine glycan. The disordered stretch occupies residues 470-512 (ARSIRDVSGGGGGGGGAGEGGKGNGGGRNRRHQRRPARRKNHE). The segment covering 477-496 (SGGGGGGGGAGEGGKGNGGG) has biased composition (gly residues). Residues 497-509 (RNRRHQRRPARRK) are compositionally biased toward basic residues. 3 cysteine pairs are disulfide-bonded: C515/C581, C544/C613, and C548/C615. N-linked (GlcNAc...) asparagine glycosylation is present at N557.

This sequence belongs to the TGF-beta family. In terms of assembly, heterodimers of scw/dpp are the active subunit, dpp/dpp homodimers elicit a basal response and scw/scw homodimers alone are ineffective in specifying a dorsal pattern. As to expression, expressed in the imaginal discs associated with establishment of the proximal-distal axis of the appendages, and midgut mesoderm.

It localises to the secreted. In terms of biological role, acts as an extracellular morphogen to establish at least two cellular response thresholds within the dorsal half of the drosophila embryo. Required for the proper development of the embryonic dorsal hypoderm, for viability of larvae and for cell viability of the epithelial cells in the imaginal disks. Acts together with scw. This is Protein decapentaplegic (dpp) from Drosophila pseudoobscura pseudoobscura (Fruit fly).